The primary structure comprises 123 residues: Protein HesB, vegetative (123 aa).

The protein belongs to the HesB/IscA family.

Functionally, may be required for efficient nitrogen fixation. The chain is Protein HesB, vegetative (hesB2) from Trichormus variabilis (strain ATCC 29413 / PCC 7937) (Anabaena variabilis).